The following is a 435-amino-acid chain: MNHKVGFVSLGCPKALVDSERIITQLKAQGYELVPTYQDAGVVVINTCGFIDSAVQESLDTIKEAMAENGRVIVTGCLGAKADVIKNACPDVLHISGAHAYEEVVNAVHQYLPPPADPFTQLIPPQGIKLTPRHYAYLKISEGCNQKCTFCIIPTMRGKLQSYPMAQILTEAKKLKQAGVKELLVISQDTSAYGVDTRYQQVEWQGKTVNTRFYDLCEQLGELGIWVRLHYVYPYPHVDDIVPLMRDGLILPYLDIPLQHANSRILKAMKRPASSENTLLRIASWREICPDITLRSTFIVGFPGETEEEFSELLAFLKEAQLDRVGCFKYSPVEGAKANDLDNPVSEDIKEERYHRFMQVQAEISRNKLKNKIGSTQTVLIDEINDDQIIARSKSDAPEIDGLVYLPKTSGITVGSFAEVVITDSDDYDLYASLV.

The 111-residue stretch at 3-113 folds into the MTTase N-terminal domain; sequence HKVGFVSLGC…VVNAVHQYLP (111 aa). [4Fe-4S] cluster contacts are provided by Cys12, Cys48, Cys77, Cys144, Cys148, and Cys151. A Radical SAM core domain is found at 130–367; that stretch reads LTPRHYAYLK…MQVQAEISRN (238 aa). The TRAM domain occupies 370 to 435; that stretch reads KNKIGSTQTV…DDYDLYASLV (66 aa).

This sequence belongs to the methylthiotransferase family. RimO subfamily. [4Fe-4S] cluster serves as cofactor.

The protein localises to the cytoplasm. The enzyme catalyses L-aspartate(89)-[ribosomal protein uS12]-hydrogen + (sulfur carrier)-SH + AH2 + 2 S-adenosyl-L-methionine = 3-methylsulfanyl-L-aspartate(89)-[ribosomal protein uS12]-hydrogen + (sulfur carrier)-H + 5'-deoxyadenosine + L-methionine + A + S-adenosyl-L-homocysteine + 2 H(+). Catalyzes the methylthiolation of an aspartic acid residue of ribosomal protein uS12. The sequence is that of Ribosomal protein uS12 methylthiotransferase RimO from Legionella pneumophila subsp. pneumophila (strain Philadelphia 1 / ATCC 33152 / DSM 7513).